The chain runs to 216 residues: MLGIGAFKQRIPRPGEALPGREQALPLHNTHLINGHPLRGEFTGLAQVQFGLGCFWGAERKFWKVPGVYTTAAGYAGGQTPNATYSEVCSGQTGHTEAVLVVFDEQAVSFEHLLRTFWESHDPTQGMQQGNDVGTQYRSAIYCTTQAQYAAALASRDAYQQQLTAAGYGAITTEIGFPAPTFYYAEDDHQQYLAKHPNGYCGLGGTGVSCPIGLDA.

The active site involves C54.

It belongs to the MsrA Met sulfoxide reductase family.

It catalyses the reaction L-methionyl-[protein] + [thioredoxin]-disulfide + H2O = L-methionyl-(S)-S-oxide-[protein] + [thioredoxin]-dithiol. The catalysed reaction is [thioredoxin]-disulfide + L-methionine + H2O = L-methionine (S)-S-oxide + [thioredoxin]-dithiol. Has an important function as a repair enzyme for proteins that have been inactivated by oxidation. Catalyzes the reversible oxidation-reduction of methionine sulfoxide in proteins to methionine. The sequence is that of Peptide methionine sulfoxide reductase MsrA from Xanthomonas oryzae pv. oryzae (strain PXO99A).